Reading from the N-terminus, the 274-residue chain is Putative pyruvate, phosphate dikinase regulatory protein 1 (274 aa).

149-156 (GISRTSKT) is an ADP binding site.

Belongs to the pyruvate, phosphate/water dikinase regulatory protein family. PDRP subfamily.

The enzyme catalyses N(tele)-phospho-L-histidyl/L-threonyl-[pyruvate, phosphate dikinase] + ADP = N(tele)-phospho-L-histidyl/O-phospho-L-threonyl-[pyruvate, phosphate dikinase] + AMP + H(+). It catalyses the reaction N(tele)-phospho-L-histidyl/O-phospho-L-threonyl-[pyruvate, phosphate dikinase] + phosphate + H(+) = N(tele)-phospho-L-histidyl/L-threonyl-[pyruvate, phosphate dikinase] + diphosphate. Its function is as follows. Bifunctional serine/threonine kinase and phosphorylase involved in the regulation of the pyruvate, phosphate dikinase (PPDK) by catalyzing its phosphorylation/dephosphorylation. In Listeria welshimeri serovar 6b (strain ATCC 35897 / DSM 20650 / CCUG 15529 / CIP 8149 / NCTC 11857 / SLCC 5334 / V8), this protein is Putative pyruvate, phosphate dikinase regulatory protein 1.